Consider the following 930-residue polypeptide: Isoleucine--tRNA ligase (930 aa).

Residues 57 to 67 carry the 'HIGH' region motif; it reads PYANGNIHVGH. Glu554 lines the L-isoleucyl-5'-AMP pocket. The short motif at 595–599 is the 'KMSKS' region element; the sequence is KMSKS. Lys598 contacts ATP. Zn(2+) contacts are provided by Cys888, Cys891, Cys908, and Cys911.

The protein belongs to the class-I aminoacyl-tRNA synthetase family. IleS type 1 subfamily. Monomer. It depends on Zn(2+) as a cofactor.

It is found in the cytoplasm. It catalyses the reaction tRNA(Ile) + L-isoleucine + ATP = L-isoleucyl-tRNA(Ile) + AMP + diphosphate. Its function is as follows. Catalyzes the attachment of isoleucine to tRNA(Ile). As IleRS can inadvertently accommodate and process structurally similar amino acids such as valine, to avoid such errors it has two additional distinct tRNA(Ile)-dependent editing activities. One activity is designated as 'pretransfer' editing and involves the hydrolysis of activated Val-AMP. The other activity is designated 'posttransfer' editing and involves deacylation of mischarged Val-tRNA(Ile). This is Isoleucine--tRNA ligase from Streptococcus mutans serotype c (strain ATCC 700610 / UA159).